A 329-amino-acid chain; its full sequence is Tryptophan--tRNA ligase (329 aa).

ATP-binding positions include 9–11 and 17–18; these read QPS and GN. The 'HIGH' region motif lies at 10–18; it reads PSGIPTIGN. Residue aspartate 133 coordinates L-tryptophan. Residues 145-147, valine 184, and 193-197 contribute to the ATP site; these read GDD and KMSKS. The 'KMSKS' region signature appears at 193–197; sequence KMSKS.

Belongs to the class-I aminoacyl-tRNA synthetase family. Homodimer.

It is found in the cytoplasm. The enzyme catalyses tRNA(Trp) + L-tryptophan + ATP = L-tryptophyl-tRNA(Trp) + AMP + diphosphate + H(+). Catalyzes the attachment of tryptophan to tRNA(Trp). The chain is Tryptophan--tRNA ligase from Staphylococcus aureus (strain MRSA252).